A 517-amino-acid chain; its full sequence is MISQICNEVIGLVPKKEEPGWLSVTGHPGAVYCENSISSGPEATGADVSQAIRIAYFTPLKHIPGPWYASLTGLRLSWSVFANNRIHYVHSLHQKYGPIVRIGPQEIDVADPVAGREIHRMGSGFMKAPFYELLSPGPVDNIFNFRDPKLHAARRKLYARGFTLQSLRNEWEPKVRDIIKLTVEKIKCDAVKGEAEIMGWWTLMANEIVCQLTFGGGAGIVAKGVKEPFVLMLERRMGDLAHLLKHFAPPGYYLGRALAWFIPPLQDIFYSQERMFAAGGDVVSRAREAKKAQAEPRNLFNKALEAGNLTDTDIITDAGALLLAGSDPTAISLTFLLWCVLSRPEVQKQVEAEVATLEGELTDEACERLPILNAVIDESLRLYGAAPGCMPRSPPSGGVTIGGYFIPDDTIVATQNWSLQRNPSIWDDADTFDHTRWLSNSRITDQAKLAFNPFGYGARQCLGIHLGRMEMRLAAAMFFRECVGARLGRSVTDESMHVVDSFIAGVPRDRRCAITLT.

Cysteine 461 serves as a coordination point for heme.

It belongs to the cytochrome P450 family. It depends on heme as a cofactor.

Its pathway is mycotoxin biosynthesis; sterigmatocystin biosynthesis. Its function is as follows. Cytochrome P450 monooxygenase; part of the gene cluster that mediates the biosynthesis of sterigmatocystin (ST), a polyketide-derived furanocoumarin which is part of the most toxic and carcinogenic compounds among the known mycotoxins. The first step in the biosynthesis of sterigmatocystin is the production of hexanoate by the fatty acid synthase (FAS) units stcJ and stcK. The polyketide backbone is assembled by the non-reducing polyketide synthase stcA by condensation of the starter hexanoyl-CoA and 7 malonyl-CoA extender units followed by cyclization and release of norsolorinic acid. Norsolorinic acid is the first stable intermediate in the biosynthesis of sterigmatocystin and is converted into averantin (AVN) by the ketoreductase stcE which reduces the hexanoate ketone to an alcohol. Averantin is then oxidized into 5'-hydroxyaverantin (HAVN) by the cytochrome P450 monooxygenase stcF. 5'-hydroxyaverantin is further converted to 5'-oxyaverantin (OAVN) by the 5'-hydroxyaverantin dehydrogenase stcG. The next step is the conversion of OAVN into averufin (AVF) which is catalyzed by a yet to be identified enzyme. The cytochrome P450 monooxygenase stcB and the flavin-binding monooxygenase stcW are both required for the conversion of averufin to 1-hydroxyversicolorone. The esterase stcI probably catalyzes the formation of versiconal hemiacetal acetate from 1-hydroxyversicolorone. The oxydoreductase stcN then probably catalyzes the biosynthetic step from versiconal to versicolorin B (VERB). The next step is performed by the versicolorin B desaturase stcL to produce versicolorin A (VERA). The ketoreductase stcU and the cytochrome P450 monooxygenase stcS are involved in the conversion of versicolorin A to demethylsterigmatocystin. The Baeyer-Villiger oxidas stcQ and the reductase stcR might be involved in the biosynthetic step from versicolorin A to demethylsterigmatocystin. The final step in the biosynthesis of sterigmatocystin is the methylation of demethylsterigmatocystin catalyzed by the methyltransferase stcP. This is Cytochrome P450 monooxygenase stcB from Emericella nidulans (strain FGSC A4 / ATCC 38163 / CBS 112.46 / NRRL 194 / M139) (Aspergillus nidulans).